We begin with the raw amino-acid sequence, 137 residues long: MFLFLPIPLNVQDIWKVNSKYKHVLLTCPVCQNKTVRVYRLVKSLALIVLPVLPVYTSKVLRCSHCGWYEPVDSAMIDQRRRREDLPTPERPEASAQQHAFFPGSSSQQTDIPNVRPQPHIPPPRKSDEAPPPYSYK.

A compositionally biased stretch (basic and acidic residues) spans 79-93 (QRRRREDLPTPERPE). A disordered region spans residues 79-137 (QRRRREDLPTPERPEASAQQHAFFPGSSSQQTDIPNVRPQPHIPPPRKSDEAPPPYSYK). Positions 119-137 (PHIPPPRKSDEAPPPYSYK) are enriched in pro residues.

It belongs to the UPF0768 family.

This Schizosaccharomyces pombe (strain 972 / ATCC 24843) (Fission yeast) protein is UPF0768 protein C1952.04c.